The primary structure comprises 74 residues: ATP synthase subunit c (74 aa).

2 helical membrane passes run 8 to 28 (FIGI…VSNI) and 52 to 72 (IGAG…MLLI).

This sequence belongs to the ATPase C chain family. As to quaternary structure, F-type ATPases have 2 components, F(1) - the catalytic core - and F(0) - the membrane proton channel. F(1) has five subunits: alpha(3), beta(3), gamma(1), delta(1), epsilon(1). F(0) has three main subunits: a(1), b(2) and c(10-14). The alpha and beta chains form an alternating ring which encloses part of the gamma chain. F(1) is attached to F(0) by a central stalk formed by the gamma and epsilon chains, while a peripheral stalk is formed by the delta and b chains.

The protein localises to the cell inner membrane. In terms of biological role, f(1)F(0) ATP synthase produces ATP from ADP in the presence of a proton or sodium gradient. F-type ATPases consist of two structural domains, F(1) containing the extramembraneous catalytic core and F(0) containing the membrane proton channel, linked together by a central stalk and a peripheral stalk. During catalysis, ATP synthesis in the catalytic domain of F(1) is coupled via a rotary mechanism of the central stalk subunits to proton translocation. Functionally, key component of the F(0) channel; it plays a direct role in translocation across the membrane. A homomeric c-ring of between 10-14 subunits forms the central stalk rotor element with the F(1) delta and epsilon subunits. The sequence is that of ATP synthase subunit c from Rickettsia felis (strain ATCC VR-1525 / URRWXCal2) (Rickettsia azadi).